Reading from the N-terminus, the 464-residue chain is MFRHHPTRGRRTAGLLAAALATLSAGLTAVAPAHPARADTATLGELAEAKGRYFGSATDNPELPDTQYTQILGSEFSQITVGNTMKWQYTEPSRGRFDYTAAEEIVDLAESNGQSVRGHTLVWHNQLPSWVDDVPAGELLGVMRDHITHEVDHFKGRLIHWDVVNEAFEEDGSRRQSVFQQKIGDSYIAEAFKAARAADPDVKLYYNDYNIEGIGPKSDAVYEMVKSFKAQGIPIDGVGMQAHLIAGQVPASLQENIRRFADLGVDVALTELDIRMTLPRTAAKDAQQATDYGAVVEACLVVSRCVGITVWDYTDKYSWVPSVFPGQGAALPWDEDFAKKPAYHAIAAALNGGSPAPGGNCTATYRVTSQWQGGFTAEITVGNDHTAPITGWTVTWTLSSGQSISHMWNGNLTVNGQDVTVRDVGYNGTLGGNGSTTFGFQGEGVADTPADVTCTPGRPSGTSA.

Residues 1 to 33 (MFRHHPTRGRRTAGLLAAALATLSAGLTAVAPA) form the signal peptide. The GH10 domain maps to 40-349 (TATLGELAEA…KPAYHAIAAA (310 aa)). E166 functions as the Proton donor in the catalytic mechanism. E271 functions as the Nucleophile in the catalytic mechanism. The region spanning 354 to 457 (SPAPGGNCTA…TPADVTCTPG (104 aa)) is the CBM2 domain.

Belongs to the glycosyl hydrolase 10 (cellulase F) family. It depends on Does not require any standard metal (Mg(2+), Mn2(+), Ca(2+)). as a cofactor.

It catalyses the reaction Endohydrolysis of (1-&gt;4)-beta-D-xylosidic linkages in xylans.. Its pathway is glycan degradation; xylan degradation. Completely inhibited by Hg(2+), unaffected by EDTA. Functionally, contributes to hydrolysis of hemicellulose, the major component of plant cell-walls. Hydrolyzes xylan to xylose and xylobiose. This is Endo-1,4-beta-xylanase A (xynAS9) from Streptomyces sp.